Reading from the N-terminus, the 319-residue chain is Heavy metal-associated isoprenylated plant protein 9 (319 aa).

2 stretches are compositionally biased toward basic and acidic residues: residues 1-11 (MGEEVKPEAKE) and 24-45 (EEKK…KPKE). Residues 1 to 57 (MGEEVKPEAKEAASAPQAVPAEEEEKKKDVAEEKKVAAEEEKPKEEEEPQPPPPPPP) are disordered. Positions 21–48 (AEEEEKKKDVAEEKKVAAEEEKPKEEEE) form a coiled coil. 2 HMA domains span residues 55 to 118 (PPPF…KRMA) and 144 to 208 (LTTV…KQAR). A metal cation-binding residues include Cys-66, Cys-69, Cys-155, and Cys-158. Residues 207–282 (ARIVPQPDPE…RDNEMTAMAQ (76 aa)) are disordered. Over residues 224-254 (QEEKKEESGEGNEKPPETGEEKEEEKKKEGE) the composition is skewed to basic and acidic residues. The segment covering 255–268 (ENGEEGGGEEAAAT) has biased composition (acidic residues). Cys-316 bears the Cysteine methyl ester mark. Cys-316 is lipidated: S-farnesyl cysteine. The propeptide at 317–319 (CIS) is removed in mature form.

The protein belongs to the HIPP family.

Its function is as follows. Heavy-metal-binding protein. This Arabidopsis thaliana (Mouse-ear cress) protein is Heavy metal-associated isoprenylated plant protein 9.